Consider the following 277-residue polypeptide: Large ribosomal subunit protein uL2 (277 aa).

The interval 222-277 (GVAMNPVDHPHGGGEGRTSGGRHPVTPWGKPTKGKKTRSNKATDKFIMRSRHQRKK) is disordered.

It belongs to the universal ribosomal protein uL2 family. As to quaternary structure, part of the 50S ribosomal subunit. Forms a bridge to the 30S subunit in the 70S ribosome.

In terms of biological role, one of the primary rRNA binding proteins. Required for association of the 30S and 50S subunits to form the 70S ribosome, for tRNA binding and peptide bond formation. It has been suggested to have peptidyltransferase activity; this is somewhat controversial. Makes several contacts with the 16S rRNA in the 70S ribosome. The sequence is that of Large ribosomal subunit protein uL2 from Brucella abortus (strain S19).